Reading from the N-terminus, the 565-residue chain is Membrane protein insertase YidC (565 aa).

Transmembrane regions (helical) follow at residues 6–26 (VLLI…WSKN), 348–368 (LMAL…SLLH), 370–390 (WGWA…PLSA), 437–457 (GGCF…WVLV), 479–499 (PYFI…KLTP), and 516–536 (PLIF…YWVI).

This sequence belongs to the OXA1/ALB3/YidC family. Type 1 subfamily. Interacts with the Sec translocase complex via SecD. Specifically interacts with transmembrane segments of nascent integral membrane proteins during membrane integration.

It localises to the cell inner membrane. Functionally, required for the insertion and/or proper folding and/or complex formation of integral membrane proteins into the membrane. Involved in integration of membrane proteins that insert both dependently and independently of the Sec translocase complex, as well as at least some lipoproteins. Aids folding of multispanning membrane proteins. The polypeptide is Membrane protein insertase YidC (Xylella fastidiosa (strain M23)).